Consider the following 138-residue polypeptide: Prefoldin subunit alpha (138 aa).

This sequence belongs to the prefoldin subunit alpha family. As to quaternary structure, heterohexamer of two alpha and four beta subunits.

The protein localises to the cytoplasm. In terms of biological role, molecular chaperone capable of stabilizing a range of proteins. Seems to fulfill an ATP-independent, HSP70-like function in archaeal de novo protein folding. This chain is Prefoldin subunit alpha, found in Methanococcoides burtonii (strain DSM 6242 / NBRC 107633 / OCM 468 / ACE-M).